The following is a 252-amino-acid chain: Pyridoxine 5'-phosphate synthase (252 aa).

Residue N12 coordinates 3-amino-2-oxopropyl phosphate. 14 to 15 is a binding site for 1-deoxy-D-xylulose 5-phosphate; that stretch reads DH. R23 contacts 3-amino-2-oxopropyl phosphate. The active-site Proton acceptor is H48. Positions 50 and 55 each coordinate 1-deoxy-D-xylulose 5-phosphate. E75 serves as the catalytic Proton acceptor. T105 contacts 1-deoxy-D-xylulose 5-phosphate. The active-site Proton donor is the H199. 3-amino-2-oxopropyl phosphate contacts are provided by residues G200 and 221 to 222; that span reads GH.

Belongs to the PNP synthase family. In terms of assembly, homooctamer; tetramer of dimers.

The protein resides in the cytoplasm. It catalyses the reaction 3-amino-2-oxopropyl phosphate + 1-deoxy-D-xylulose 5-phosphate = pyridoxine 5'-phosphate + phosphate + 2 H2O + H(+). Its pathway is cofactor biosynthesis; pyridoxine 5'-phosphate biosynthesis; pyridoxine 5'-phosphate from D-erythrose 4-phosphate: step 5/5. Functionally, catalyzes the complicated ring closure reaction between the two acyclic compounds 1-deoxy-D-xylulose-5-phosphate (DXP) and 3-amino-2-oxopropyl phosphate (1-amino-acetone-3-phosphate or AAP) to form pyridoxine 5'-phosphate (PNP) and inorganic phosphate. This Cereibacter sphaeroides (strain ATCC 17029 / ATH 2.4.9) (Rhodobacter sphaeroides) protein is Pyridoxine 5'-phosphate synthase.